We begin with the raw amino-acid sequence, 62 residues long: Large ribosomal subunit protein bL28 (62 aa).

This sequence belongs to the bacterial ribosomal protein bL28 family.

The protein is Large ribosomal subunit protein bL28 of Staphylococcus epidermidis (strain ATCC 12228 / FDA PCI 1200).